The sequence spans 1104 residues: Transposon Ty4-P Gag-Pol polyprotein (1104 aa).

The stretch at 48-112 forms a coiled coil; it reads VKQYQRNLNR…VEKIQLLETN (65 aa). Positions 381 to 501 are ty4 protease; sequence QQQLKSSAKE…KTKMVLSRKY (121 aa). Residue Asp414 is the For protease activity; shared with dimeric partner of the active site. An integrase-type zinc finger-like region spans residues 539 to 599; sequence AIKPTSSPGF…EPNEFWCQTC (61 aa). Residues 619–786 form the Integrase catalytic domain; the sequence is TDHEPGSSWC…LPLKAISRQP (168 aa). The Mg(2+) site is built by Asp630 and Asp695.

As to quaternary structure, the protease is a homodimer, whose active site consists of two apposed aspartic acid residues. Proteolytically processed into capsid protein (CA), Ty4 protease (PR), integrase (IN) and reverse transcriptase/ribonuclease H (RT) proteins. Initially, virus-like particles (VLPs) are composed of the structural unprocessed proteins Gag and Gag-Pol, and also contain the host initiator methionine tRNA (tRNA(i)-Met) which serves as a primer for minus-strand DNA synthesis, and a dimer of genomic Ty RNA. Processing of the polyproteins occurs within the particle and proceeds by an ordered pathway, called maturation. First, the protease (PR) is released by autocatalytic cleavage of the Gag-Pol polyprotein, and this cleavage is a prerequisite for subsequent processing at the remaining sites to release the mature structural and catalytic proteins. Maturation takes place prior to the RT reaction and is required to produce transposition-competent VLPs.

It is found in the cytoplasm. The protein localises to the nucleus. It catalyses the reaction DNA(n) + a 2'-deoxyribonucleoside 5'-triphosphate = DNA(n+1) + diphosphate. The enzyme catalyses Endonucleolytic cleavage to 5'-phosphomonoester.. Capsid protein (CA) is the structural component of the virus-like particle (VLP), forming the shell that encapsulates the retrotransposons dimeric RNA genome. Its function is as follows. The aspartyl protease (PR) mediates the proteolytic cleavages of the Gag and Gag-Pol polyproteins after assembly of the VLP. Functionally, reverse transcriptase/ribonuclease H (RT) is a multifunctional enzyme that catalyzes the conversion of the retro-elements RNA genome into dsDNA within the VLP. The enzyme displays a DNA polymerase activity that can copy either DNA or RNA templates, and a ribonuclease H (RNase H) activity that cleaves the RNA strand of RNA-DNA heteroduplexes during plus-strand synthesis and hydrolyzes RNA primers. The conversion leads to a linear dsDNA copy of the retrotransposon that includes long terminal repeats (LTRs) at both ends. In terms of biological role, integrase (IN) targets the VLP to the nucleus, where a subparticle preintegration complex (PIC) containing at least integrase and the newly synthesized dsDNA copy of the retrotransposon must transit the nuclear membrane. Once in the nucleus, integrase performs the integration of the dsDNA into the host genome. In Saccharomyces cerevisiae (strain ATCC 204508 / S288c) (Baker's yeast), this protein is Transposon Ty4-P Gag-Pol polyprotein (TY4B-P).